The primary structure comprises 181 residues: Peptide deformylase (181 aa).

The Fe cation site is built by Cys99 and His141. Glu142 is a catalytic residue. His145 lines the Fe cation pocket.

This sequence belongs to the polypeptide deformylase family. Requires Fe(2+) as cofactor.

The catalysed reaction is N-terminal N-formyl-L-methionyl-[peptide] + H2O = N-terminal L-methionyl-[peptide] + formate. Its function is as follows. Removes the formyl group from the N-terminal Met of newly synthesized proteins. Requires at least a dipeptide for an efficient rate of reaction. N-terminal L-methionine is a prerequisite for activity but the enzyme has broad specificity at other positions. The polypeptide is Peptide deformylase (Chlamydia trachomatis serovar A (strain ATCC VR-571B / DSM 19440 / HAR-13)).